Reading from the N-terminus, the 385-residue chain is Glucans biosynthesis protein C (385 aa).

Transmembrane regions (helical) follow at residues 17–37, 60–80, 91–111, 137–157, 173–193, 212–232, 239–259, 274–294, 311–331, and 338–358; these read AWLMLLGIPFHISLIYSSHTW, MQVFFVISGYFSYMLFLRYPL, VGIPMLTAIPLLTLPQFIMLQ, ISHLWFLLVLVVMTTLCVWIF, KFSMVKLSVIFLCLGIGYAVI, FIVMQTLFYLPFFILGALAFI, LFTTPSRGCTLAAALAFVAYL, TESVITMVLGLWMVNVVFSFG, ASLFIYLVHHPLTLFFGAYIT, and WLGFLCGLIFVVGIAIILYEI.

This sequence belongs to the acyltransferase 3 family. OpgC subfamily.

Its subcellular location is the cell membrane. The protein operates within glycan metabolism; osmoregulated periplasmic glucan (OPG) biosynthesis. Its function is as follows. Necessary for the succinyl substitution of periplasmic glucans. Could catalyze the transfer of succinyl residues from the cytoplasmic side of the membrane to the nascent glucan backbones on the periplasmic side of the membrane. This chain is Glucans biosynthesis protein C, found in Escherichia coli (strain K12 / MC4100 / BW2952).